The following is a 345-amino-acid chain: GDSL esterase/lipase At1g23500 (345 aa).

The first 24 residues, 1 to 24 (MNFSLLSTMLMALSSVCLFFVGYA), serve as a signal peptide directing secretion. The active-site Nucleophile is serine 42. An N-linked (GlcNAc...) asparagine glycan is attached at asparagine 103. Catalysis depends on residues aspartate 320 and histidine 323.

The protein belongs to the 'GDSL' lipolytic enzyme family.

Its subcellular location is the secreted. This chain is GDSL esterase/lipase At1g23500, found in Arabidopsis thaliana (Mouse-ear cress).